The chain runs to 218 residues: Methylthioribulose-1-phosphate dehydratase (218 aa).

Positions 107 and 109 each coordinate Zn(2+).

This sequence belongs to the aldolase class II family. MtnB subfamily. Zn(2+) is required as a cofactor.

The catalysed reaction is 5-(methylsulfanyl)-D-ribulose 1-phosphate = 5-methylsulfanyl-2,3-dioxopentyl phosphate + H2O. The protein operates within amino-acid biosynthesis; L-methionine biosynthesis via salvage pathway; L-methionine from S-methyl-5-thio-alpha-D-ribose 1-phosphate: step 2/6. Its function is as follows. Catalyzes the dehydration of methylthioribulose-1-phosphate (MTRu-1-P) into 2,3-diketo-5-methylthiopentyl-1-phosphate (DK-MTP-1-P). This is Methylthioribulose-1-phosphate dehydratase from Xylella fastidiosa (strain 9a5c).